We begin with the raw amino-acid sequence, 316 residues long: Succinoglycan biosynthesis protein ExoV (316 aa).

It functions in the pathway glycan metabolism; exopolysaccharide biosynthesis. This is Succinoglycan biosynthesis protein ExoV (exoV) from Rhizobium meliloti (strain 1021) (Ensifer meliloti).